The chain runs to 315 residues: MSESLRIIFAGTPDFAARHLDALLSSGHNIVGVFTQPDRPAGRGKKLMPSPVKVLAEDKGLPVFQPVSLRPQENQQLVADLQADVMVVVAYGLILPKAVLEMPRLGCINVHGSLLPRWRGAAPIQRSLWAGDAETGVTIMQMDVGLDTGDMLYKLSCPITAEDTSGTLYDKLAELGPQGLITTLKQLADGTAKPEVQDETLVTYAEKLSKEEARIDWSLSAAQLERCIRAFNPWPMSWLEIEGQPVKVWKASVIDTTTKAAPGTILEANKQGIQVATGDGILNLLSMQPAGKKAMSVQDLLNSRREWFVPGNRLA.

113 to 116 (SLLP) contacts (6S)-5,6,7,8-tetrahydrofolate.

The protein belongs to the Fmt family.

The enzyme catalyses L-methionyl-tRNA(fMet) + (6R)-10-formyltetrahydrofolate = N-formyl-L-methionyl-tRNA(fMet) + (6S)-5,6,7,8-tetrahydrofolate + H(+). Attaches a formyl group to the free amino group of methionyl-tRNA(fMet). The formyl group appears to play a dual role in the initiator identity of N-formylmethionyl-tRNA by promoting its recognition by IF2 and preventing the misappropriation of this tRNA by the elongation apparatus. The chain is Methionyl-tRNA formyltransferase from Escherichia coli O45:K1 (strain S88 / ExPEC).